Reading from the N-terminus, the 109-residue chain is Nucleoid-associated protein BU482 (109 aa).

The protein belongs to the YbaB/EbfC family. Homodimer.

It localises to the cytoplasm. The protein localises to the nucleoid. Its function is as follows. Binds to DNA and alters its conformation. May be involved in regulation of gene expression, nucleoid organization and DNA protection. This is Nucleoid-associated protein BU482 from Buchnera aphidicola subsp. Acyrthosiphon pisum (strain APS) (Acyrthosiphon pisum symbiotic bacterium).